The primary structure comprises 217 residues: Adenylate kinase (217 aa).

10-15 (GSGKGT) contacts ATP. The interval 30–59 (STGDLLRAAVAAGSELGKQAKAAMDAGELV) is NMP. AMP-binding positions include Thr31, Arg36, 57-59 (ELV), 85-88 (GFPR), and Gln92. The LID stretch occupies residues 126–164 (GRRTCQACGAIYNIYFSPPEVDHRCDKCNSDQLVQRSDD). ATP is bound at residue Arg127. 2 residues coordinate Zn(2+): Cys130 and Cys133. Residue 136-137 (IY) participates in ATP binding. Cys150 and Cys153 together coordinate Zn(2+). AMP is bound by residues Arg161 and Arg172. An ATP-binding site is contributed by Asp200.

Belongs to the adenylate kinase family. As to quaternary structure, monomer.

The protein localises to the cytoplasm. The enzyme catalyses AMP + ATP = 2 ADP. The protein operates within purine metabolism; AMP biosynthesis via salvage pathway; AMP from ADP: step 1/1. Catalyzes the reversible transfer of the terminal phosphate group between ATP and AMP. Plays an important role in cellular energy homeostasis and in adenine nucleotide metabolism. The sequence is that of Adenylate kinase from Nitrosococcus oceani (strain ATCC 19707 / BCRC 17464 / JCM 30415 / NCIMB 11848 / C-107).